Here is a 470-residue protein sequence, read N- to C-terminus: MSRLGALGGSRAGLGLLLGTAAGLGFLCVLYSQRWKRTQRHGRSHSLPNSLDYAQASERGRQVTQFRAIPGEAGDAAILPSLSQEGQEKVLDRLDFVLTSLMALRREVEELQRSLQGLAGEIVGEVRSHIEENQRVARRRRFPFARERSDSTGSSSVYFTASSGAALTDAESEGGYTTANAESDYERDSDKESGDAEDEVSCETVRMGRKDSLDLDVEAASSPAAAALEEDDSSGREDVQLVLLQADELHQGSKQDKREGFQLLLNNKLAYGSRQDFLWRLARAYSDMSDLTEEESGKKSYALNGKEEAEAALKKGDESAACHLWYAVLCGQLAEHEGISKRIQSGFSFKEHVDKAIELQPEDPRGHFLLGRWCYQVSHLNWLEKKTATALFESPLSATVQDALQSFLKAEELQPGFSKAGRVYISKCYRELGKNSEARKWMKLAQELPDVTNEDSAFQKDLEELEVILG.

The Mitochondrial intermembrane portion of the chain corresponds to 1-12; that stretch reads MSRLGALGGSRA. A helical membrane pass occupies residues 13–35; that stretch reads GLGLLLGTAAGLGFLCVLYSQRW. The Cytoplasmic segment spans residues 36 to 470; the sequence is KRTQRHGRSH…DLEELEVILG (435 aa). 4 positions are modified to phosphoserine: serine 44, serine 46, serine 50, and serine 57. Residues 91–125 adopt a coiled-coil conformation; that stretch reads LDRLDFVLTSLMALRREVEELQRSLQGLAGEIVGE. The FFAT signature appears at 157–163; the sequence is VYFTASS. Threonine 160 is modified (phosphothreonine). The disordered stretch occupies residues 168–205; sequence TDAESEGGYTTANAESDYERDSDKESGDAEDEVSCETV. A phosphoserine mark is found at serine 183, serine 193, serine 212, and serine 233. Positions 184–194 are enriched in basic and acidic residues; sequence DYERDSDKESG.

Belongs to the RMDN family. In terms of assembly, interacts with PTPN2. Interacts with microtubules. Interacts with VAPB. Interacts (via FFAT motif) with MOSPD2 (via MSP domain). Interacts (via phosphorylated FFAT motif) with MOSPD2, VAPA and VAPB. Post-translationally, phosphorylation at Thr-160 of the FFAT motif activates interaction with MOSPD2, VAPA and VAPB.

The protein resides in the mitochondrion outer membrane. Its subcellular location is the cytoplasm. The protein localises to the nucleus. It localises to the cytoskeleton. It is found in the spindle. The protein resides in the spindle pole. Its function is as follows. Involved in cellular calcium homeostasis regulation. May participate in differentiation and apoptosis of keratinocytes. Overexpression induces apoptosis. This is Regulator of microtubule dynamics protein 3 from Mus musculus (Mouse).